Reading from the N-terminus, the 499-residue chain is Isoflavone 2'-hydroxylase (499 aa).

Cys-436 lines the heme pocket.

Belongs to the cytochrome P450 family. Heme serves as cofactor.

It is found in the membrane. The enzyme catalyses a 2'-unsubstituted isoflavone + reduced [NADPH--hemoprotein reductase] + O2 = a 2'-hydroxyisoflavone + oxidized [NADPH--hemoprotein reductase] + H2O + H(+). In terms of biological role, catalyzes the hydroxylation of isoflavones, daidzein and formononetin, to yield 2'-hydroxyisoflavones, 2'-hydroxydaidzein, and 2'-hydroxyformononetin, respectively. In Glycyrrhiza echinata (Licorice), this protein is Isoflavone 2'-hydroxylase (CYP81E1).